The sequence spans 246 residues: Indole-3-glycerol phosphate synthase (246 aa).

Belongs to the TrpC family.

The enzyme catalyses 1-(2-carboxyphenylamino)-1-deoxy-D-ribulose 5-phosphate + H(+) = (1S,2R)-1-C-(indol-3-yl)glycerol 3-phosphate + CO2 + H2O. It participates in amino-acid biosynthesis; L-tryptophan biosynthesis; L-tryptophan from chorismate: step 4/5. The polypeptide is Indole-3-glycerol phosphate synthase (Sulfurisphaera tokodaii (strain DSM 16993 / JCM 10545 / NBRC 100140 / 7) (Sulfolobus tokodaii)).